Reading from the N-terminus, the 139-residue chain is UDP-glucose 4-epimerase (139 aa).

Residues 11–12, 31–36, 58–59, 80–84, N99, and S124 each bind NAD(+); these read YI, DNLCNS, DI, and FAGLK. Residue S124 participates in substrate binding. Y136 acts as the Proton acceptor in catalysis.

Belongs to the NAD(P)-dependent epimerase/dehydratase family. Homodimer. NAD(+) serves as cofactor.

It catalyses the reaction UDP-alpha-D-glucose = UDP-alpha-D-galactose. It participates in carbohydrate metabolism; galactose metabolism. In terms of biological role, involved in the metabolism of galactose. Catalyzes the conversion of UDP-galactose (UDP-Gal) to UDP-glucose (UDP-Glc) through a mechanism involving the transient reduction of NAD. In Klebsiella pneumoniae, this protein is UDP-glucose 4-epimerase (galE).